The following is a 286-amino-acid chain: Thymidylate synthase (286 aa).

140–141 (RR) lines the dUMP pocket. The Nucleophile role is filled by Cys-161. DUMP is bound by residues 185 to 188 (RSND), Asn-196, and 226 to 228 (HIY). A (6R)-5,10-methylene-5,6,7,8-tetrahydrofolate-binding site is contributed by Asp-188. Residue Ala-285 coordinates (6R)-5,10-methylene-5,6,7,8-tetrahydrofolate.

The protein belongs to the thymidylate synthase family. Bacterial-type ThyA subfamily. Homodimer.

The protein resides in the cytoplasm. It catalyses the reaction dUMP + (6R)-5,10-methylene-5,6,7,8-tetrahydrofolate = 7,8-dihydrofolate + dTMP. It participates in pyrimidine metabolism; dTTP biosynthesis. Functionally, catalyzes the reductive methylation of 2'-deoxyuridine-5'-monophosphate (dUMP) to 2'-deoxythymidine-5'-monophosphate (dTMP) while utilizing 5,10-methylenetetrahydrofolate (mTHF) as the methyl donor and reductant in the reaction, yielding dihydrofolate (DHF) as a by-product. This enzymatic reaction provides an intracellular de novo source of dTMP, an essential precursor for DNA biosynthesis. This is Thymidylate synthase from Streptococcus thermophilus (strain ATCC BAA-491 / LMD-9).